The following is a 216-amino-acid chain: Probable transaldolase (216 aa).

The active-site Schiff-base intermediate with substrate is K83.

It belongs to the transaldolase family. Type 3B subfamily.

It localises to the cytoplasm. The catalysed reaction is D-sedoheptulose 7-phosphate + D-glyceraldehyde 3-phosphate = D-erythrose 4-phosphate + beta-D-fructose 6-phosphate. Its pathway is carbohydrate degradation; pentose phosphate pathway; D-glyceraldehyde 3-phosphate and beta-D-fructose 6-phosphate from D-ribose 5-phosphate and D-xylulose 5-phosphate (non-oxidative stage): step 2/3. Its function is as follows. Transaldolase is important for the balance of metabolites in the pentose-phosphate pathway. The chain is Probable transaldolase from Clostridioides difficile (strain 630) (Peptoclostridium difficile).